The primary structure comprises 275 residues: 2-dehydro-3-deoxyphosphooctonate aldolase (275 aa).

The protein belongs to the KdsA family.

The protein resides in the cytoplasm. The enzyme catalyses D-arabinose 5-phosphate + phosphoenolpyruvate + H2O = 3-deoxy-alpha-D-manno-2-octulosonate-8-phosphate + phosphate. It functions in the pathway carbohydrate biosynthesis; 3-deoxy-D-manno-octulosonate biosynthesis; 3-deoxy-D-manno-octulosonate from D-ribulose 5-phosphate: step 2/3. It participates in bacterial outer membrane biogenesis; lipopolysaccharide biosynthesis. This is 2-dehydro-3-deoxyphosphooctonate aldolase from Francisella philomiragia subsp. philomiragia (strain ATCC 25017 / CCUG 19701 / FSC 153 / O#319-036).